Reading from the N-terminus, the 595-residue chain is MKMTQMYMPTLREIPNEAVVESHKLLLRAGMIRNLANGLFAYLPLGLKAFRKVEKIIREEMDAIGCLEFKPPVIVPGEIWQESGRWDSMGPELLRIKNRLNQELVVSPTAEEAFTALLKNELSSYKNYPLLTYQINTKYRDEIRPRYGLMRTREFTMKDAYSFHTNDKSLDEAYLSFEKAYIKIFKRCGLTVIGVKADSGAMGGSGSQEFMVESSVGDDTLLLCPSCGYAANEEKAACAPDKEQGNGNMPQGSALSIEEIDTPNVKTIEDLTAFLKTESSSFIKTLIYRVENSEILGNAENGKKAAKNENKTVLIAVCIRGDLEVNEAKLKSSLKASDAILASDTEVEEATGTIVGFAGPVGLKNIPVIADESVMLMHDAVTGALKKDKHLLHVEPSRDFTPAHVFDLRTVRAGDKCAVCGTALYTKKGNELGHIFKLGYKYTKAMNMTYLDENGKQQHPSMGCYGIGLDRLTASIVEEHHDEDGIIWPMSIAPFQVAIVPIKYEGEMQKEADRLYEECKKRGIEALLDDRKERTGVKFKDMDLIGIPIRLVVGEKNLPNIEFKLRKAVESSLVDKDKVVDLVEKTVKEELAKLN.

This sequence belongs to the class-II aminoacyl-tRNA synthetase family. ProS type 1 subfamily. In terms of assembly, homodimer.

It localises to the cytoplasm. It catalyses the reaction tRNA(Pro) + L-proline + ATP = L-prolyl-tRNA(Pro) + AMP + diphosphate. Catalyzes the attachment of proline to tRNA(Pro) in a two-step reaction: proline is first activated by ATP to form Pro-AMP and then transferred to the acceptor end of tRNA(Pro). As ProRS can inadvertently accommodate and process non-cognate amino acids such as alanine and cysteine, to avoid such errors it has two additional distinct editing activities against alanine. One activity is designated as 'pretransfer' editing and involves the tRNA(Pro)-independent hydrolysis of activated Ala-AMP. The other activity is designated 'posttransfer' editing and involves deacylation of mischarged Ala-tRNA(Pro). The misacylated Cys-tRNA(Pro) is not edited by ProRS. The chain is Proline--tRNA ligase from Treponema denticola (strain ATCC 35405 / DSM 14222 / CIP 103919 / JCM 8153 / KCTC 15104).